The chain runs to 1057 residues: Carbamoyl phosphate synthase large chain (1057 aa).

A carboxyphosphate synthetic domain region spans residues 1-401; it reads MPKRDDIQTI…SLLKAIRSLE (401 aa). Positions 129, 169, 175, 176, 208, 210, 215, 241, 242, 243, 284, and 298 each coordinate ATP. In terms of domain architecture, ATP-grasp 1 spans 133–327; it reads RTLMNDLNVP…IAKLAAKIAV (195 aa). Mg(2+)-binding residues include Q284, E298, and N300. Positions 284, 298, and 300 each coordinate Mn(2+). The interval 402–546 is oligomerization domain; the sequence is YGVHHLGLPN…YGTYEDENES (145 aa). The tract at residues 547-929 is carbamoyl phosphate synthetic domain; the sequence is IVTDKEKILV…ALYKGLTGSG (383 aa). Positions 671-861 constitute an ATP-grasp 2 domain; it reads EALLREISVP…MAQLAMRAIM (191 aa). ATP-binding residues include R707, R746, L748, E752, G777, V778, H779, S780, Q820, and E832. Residues Q820, E832, and N834 each coordinate Mg(2+). Mn(2+) is bound by residues Q820, E832, and N834. An MGS-like domain is found at 930-1057; it reads FEVKDHGTVL…ESMTFTMRNV (128 aa). Residues 930–1057 form an allosteric domain region; that stretch reads FEVKDHGTVL…ESMTFTMRNV (128 aa).

The protein belongs to the CarB family. As to quaternary structure, composed of two chains; the small (or glutamine) chain promotes the hydrolysis of glutamine to ammonia, which is used by the large (or ammonia) chain to synthesize carbamoyl phosphate. Tetramer of heterodimers (alpha,beta)4. It depends on Mg(2+) as a cofactor. The cofactor is Mn(2+).

It carries out the reaction hydrogencarbonate + L-glutamine + 2 ATP + H2O = carbamoyl phosphate + L-glutamate + 2 ADP + phosphate + 2 H(+). The enzyme catalyses hydrogencarbonate + NH4(+) + 2 ATP = carbamoyl phosphate + 2 ADP + phosphate + 2 H(+). It functions in the pathway amino-acid biosynthesis; L-arginine biosynthesis; carbamoyl phosphate from bicarbonate: step 1/1. It participates in pyrimidine metabolism; UMP biosynthesis via de novo pathway; (S)-dihydroorotate from bicarbonate: step 1/3. Functionally, large subunit of the glutamine-dependent carbamoyl phosphate synthetase (CPSase). CPSase catalyzes the formation of carbamoyl phosphate from the ammonia moiety of glutamine, carbonate, and phosphate donated by ATP, constituting the first step of 2 biosynthetic pathways, one leading to arginine and/or urea and the other to pyrimidine nucleotides. The large subunit (synthetase) binds the substrates ammonia (free or transferred from glutamine from the small subunit), hydrogencarbonate and ATP and carries out an ATP-coupled ligase reaction, activating hydrogencarbonate by forming carboxy phosphate which reacts with ammonia to form carbamoyl phosphate. The polypeptide is Carbamoyl phosphate synthase large chain (Staphylococcus epidermidis (strain ATCC 35984 / DSM 28319 / BCRC 17069 / CCUG 31568 / BM 3577 / RP62A)).